Here is a 160-residue protein sequence, read N- to C-terminus: UPF0262 protein BCAN_A0255 (160 aa).

It belongs to the UPF0262 family.

This is UPF0262 protein BCAN_A0255 from Brucella canis (strain ATCC 23365 / NCTC 10854 / RM-666).